We begin with the raw amino-acid sequence, 161 residues long: MDSPGRRSGSAMSLRKLGLVVAIFFFMMGTTVVVLYKYLNAKSSGGTEQKPEGAFGIPLRKESSRLRPNGGERMSILSMDAEHVRRLFDVLFEDINNAKEAYEDIMNLLEEYKVKRGISKKTKSFIDMLLSFLKSAPGTESEDIKILKSLANIVAKHYLKK.

Residues 16 to 36 form a helical membrane-spanning segment; the sequence is KLGLVVAIFFFMMGTTVVVLY.

The protein resides in the membrane. This is an uncharacterized protein from Encephalitozoon cuniculi (strain GB-M1) (Microsporidian parasite).